Here is a 426-residue protein sequence, read N- to C-terminus: Serine--tRNA ligase (426 aa).

The segment at 36-66 is disordered; the sequence is KRRHLQERTQDLQSQRNTISKEIGQKKAKGE. Positions 46 to 55 are enriched in polar residues; the sequence is DLQSQRNTIS. 233-235 lines the L-serine pocket; that stretch reads TAE. 264–266 lines the ATP pocket; that stretch reads RSE. An L-serine-binding site is contributed by Glu287. 351–354 contacts ATP; the sequence is EISS. Residue Ser387 participates in L-serine binding.

It belongs to the class-II aminoacyl-tRNA synthetase family. Type-1 seryl-tRNA synthetase subfamily. In terms of assembly, homodimer. The tRNA molecule binds across the dimer.

It is found in the cytoplasm. The catalysed reaction is tRNA(Ser) + L-serine + ATP = L-seryl-tRNA(Ser) + AMP + diphosphate + H(+). The enzyme catalyses tRNA(Sec) + L-serine + ATP = L-seryl-tRNA(Sec) + AMP + diphosphate + H(+). Its pathway is aminoacyl-tRNA biosynthesis; selenocysteinyl-tRNA(Sec) biosynthesis; L-seryl-tRNA(Sec) from L-serine and tRNA(Sec): step 1/1. Functionally, catalyzes the attachment of serine to tRNA(Ser). Is also able to aminoacylate tRNA(Sec) with serine, to form the misacylated tRNA L-seryl-tRNA(Sec), which will be further converted into selenocysteinyl-tRNA(Sec). This chain is Serine--tRNA ligase, found in Francisella tularensis subsp. novicida (strain U112).